The primary structure comprises 485 residues: MIISMNQTEPAQLADGEHLSGYASSSNSVRYLDDRHPLDYLDLGTVHALNTTAINTSDLNETGSRPLDPVLIDRFLSNRAVDSPWYHMLISMYGVLIVFGALGNTLVVIAVIRKPIMRTARNLFILNLAISDLLLCLVTMPLTLMEILSKYWPYGSCSILCKTIAMLQALCIFVSTISITAIAFDRYQVIVYPTRDSLQFVGAVTILAGIWALALLLASPLFVYKELINTDTPALLQQIGLQDTIPYCIEDWPSRNGRFYYSIFSLCVQYLVPILIVSVAYFGIYNKLKSRITVVAVQASSAQRKVERGRRMKRTNCLLISIAIIFGVSWLPLNFFNLYADMERSPVTQSMLVRYAICHMIGMSSACSNPLLYGWLNDNFRKEFQELLCRCSDTNVALNGHTTGCNVQAAARRRRKLGAELSKGELKLLGPGGAQSGTAGGEGGLAATDFMTGHHEGGLRSAITESVALTDHNPVPSEVTKLMPR.

At 1–91 (MIISMNQTEP…DSPWYHMLIS (91 aa)) the chain is on the extracellular side. Residues 92–112 (MYGVLIVFGALGNTLVVIAVI) traverse the membrane as a helical segment. The Cytoplasmic portion of the chain corresponds to 113–122 (RKPIMRTARN). A helical transmembrane segment spans residues 123–143 (LFILNLAISDLLLCLVTMPLT). Residues 144-163 (LMEILSKYWPYGSCSILCKT) are Extracellular-facing. The cysteines at positions 161 and 248 are disulfide-linked. The helical transmembrane segment at 164–184 (IAMLQALCIFVSTISITAIAF) threads the bilayer. Topologically, residues 185 to 202 (DRYQVIVYPTRDSLQFVG) are cytoplasmic. A helical transmembrane segment spans residues 203–223 (AVTILAGIWALALLLASPLFV). At 224–262 (YKELINTDTPALLQQIGLQDTIPYCIEDWPSRNGRFYYS) the chain is on the extracellular side. Residues 263–283 (IFSLCVQYLVPILIVSVAYFG) traverse the membrane as a helical segment. Topologically, residues 284–317 (IYNKLKSRITVVAVQASSAQRKVERGRRMKRTNC) are cytoplasmic. A helical transmembrane segment spans residues 318 to 338 (LLISIAIIFGVSWLPLNFFNL). The Extracellular portion of the chain corresponds to 339–355 (YADMERSPVTQSMLVRY). Residues 356–376 (AICHMIGMSSACSNPLLYGWL) traverse the membrane as a helical segment. Residues 377–485 (NDNFRKEFQE…PSEVTKLMPR (109 aa)) are Cytoplasmic-facing.

Belongs to the G-protein coupled receptor 1 family. Expressed in midgut, brain lobes and ventral nerve cord of larvae. In adults, expressed in a pair of dorsolateral neurons in the protocerebrum, and the central complex and a small number of neurons in the subesophageal ganglion (at protein level). Expressed in a subset of sugar-responsive PAIN neurons in the thoracic body but is absent from other peripheral PAIN neurons.

It localises to the membrane. Receptor for NPF. Integral part of the sensory system that mediates food signaling, providing the neural basis for the regulation of food response; coordinates larval foraging and social behavior changes during development. Required in dopaminergic (DA) neurons that innervate the mushroom body for satiety to suppress appetitive memory performance; a key factor in the internal state of hunger in the brain. NPF neurons coordinately modulate diverse sensory and motor neurons important for feeding, flight, and locomotion. NPF/NPFR pathway exerts its suppressive effect on larval aversion to diverse stressful stimuli (chemical stress and noxious heat) through attenuation of TRP channel-induced neuronal excitation. NPF neural signaling system plays a physiological role in acute modulation of alcohol sensitivity in adults, rather than a general response to intoxication by sedative agents. Activation and inhibition of the NPF system reduces and enhances ethanol preference, respectively. Sexual experience, the NPF system activity and ethanol consumption are all linked; sexual deprivation is a major contributor to enhanced ethanol preference. The polypeptide is Neuropeptide F receptor (Drosophila melanogaster (Fruit fly)).